The primary structure comprises 371 residues: RxLR effector protein PITG_12731 (371 aa).

Positions 1-24 (MRFYSVLLTIVTLIASTYDAKVNA) are cleaved as a signal peptide. The short motif at 43 to 53 (RMLRADHADER) is the RxLR-dEER element.

It belongs to the RxLR effector family.

Its subcellular location is the secreted. The protein localises to the host nucleus. It is found in the host cytoplasm. Functionally, effector that enhances P.infestans colonization of Nicotiana benthamiana leaves. This Phytophthora infestans (strain T30-4) (Potato late blight agent) protein is RxLR effector protein PITG_12731.